Reading from the N-terminus, the 270-residue chain is Phosphatidylinositol transfer protein alpha isoform (270 aa).

6 residues coordinate a 1,2-diacyl-sn-glycero-3-phospho-(1D-myo-inositol): threonine 58, lysine 60, glutamate 85, asparagine 89, threonine 96, and lysine 194. Lysine 215 carries the N6-acetyllysine modification.

This sequence belongs to the PtdIns transfer protein family. PI transfer class I subfamily. Phosphorylated by PKC in a calcium and phosphatidylserine-dependent manner.

The protein localises to the cytoplasm. It is found in the nucleus. It carries out the reaction a 1,2-diacyl-sn-glycero-3-phosphocholine(in) = a 1,2-diacyl-sn-glycero-3-phosphocholine(out). The catalysed reaction is a 1,2-diacyl-sn-glycero-3-phospho-(1D-myo-inositol)(in) = a 1,2-diacyl-sn-glycero-3-phospho-(1D-myo-inositol)(out). Functionally, catalyzes the transfer of phosphatidylinositol (PI) and phosphatidylcholine (PC) between membranes. Shows a preference for PI and PC containing shorter saturated or monosaturated acyl chains at the sn-1 and sn-2 positions. Preference order for PC is C16:1 &gt; C16:0 &gt; C18:1 &gt; C18:0 &gt; C20:4 and for PI is C16:1 &gt; C16:0 &gt; C18:1 &gt; C18:0 &gt; C20:4 &gt; C20:3. In Bos taurus (Bovine), this protein is Phosphatidylinositol transfer protein alpha isoform (PITPNA).